The primary structure comprises 312 residues: MPSLPTLIFIAIFCLESLAAMLQNGFLVTMLGREWVRCRMLSTSDMIVACLAASRFCLHGVAMANNLLASLDFSRAVPYMNIFWDLFNALTLWFTALLAAFYCVKISSFSHPTFAWLKWRISRLVPKLIKGSLIICGLEVISSATGNILFGQRKVSLSSYRNETLVYRVQASFQLYFFLYDGFVWSIPFLLFLVSTVLLIVSLCWQLGQMRDLRPGPCDPSTQAYTMALKSLTFSLIFCTLYFLSLFASALKIINFQNHWHWAWEVLIYANICLHSTVLVLRSPKLKKGLKTWPQLQCPCDAGSQGFGRCWP.

Topologically, residues 1–4 (MPSL) are extracellular. Residues 5–27 (PTLIFIAIFCLESLAAMLQNGFL) form a helical membrane-spanning segment. The Cytoplasmic portion of the chain corresponds to 28 to 39 (VTMLGREWVRCR). Residues 40–62 (MLSTSDMIVACLAASRFCLHGVA) form a helical membrane-spanning segment. At 63 to 81 (MANNLLASLDFSRAVPYMN) the chain is on the extracellular side. Residues 82 to 104 (IFWDLFNALTLWFTALLAAFYCV) form a helical membrane-spanning segment. The Cytoplasmic segment spans residues 105–127 (KISSFSHPTFAWLKWRISRLVPK). A helical membrane pass occupies residues 128 to 150 (LIKGSLIICGLEVISSATGNILF). Over 151–182 (GQRKVSLSSYRNETLVYRVQASFQLYFFLYDG) the chain is Extracellular. Asn-162 is a glycosylation site (N-linked (GlcNAc...) asparagine). Residues 183 to 205 (FVWSIPFLLFLVSTVLLIVSLCW) form a helical membrane-spanning segment. Residues 206–231 (QLGQMRDLRPGPCDPSTQAYTMALKS) are Cytoplasmic-facing. The chain crosses the membrane as a helical span at residues 232–254 (LTFSLIFCTLYFLSLFASALKII). The Extracellular portion of the chain corresponds to 255–258 (NFQN). The chain crosses the membrane as a helical span at residues 259 to 281 (HWHWAWEVLIYANICLHSTVLVL). Residues 282–312 (RSPKLKKGLKTWPQLQCPCDAGSQGFGRCWP) are Cytoplasmic-facing.

Belongs to the G-protein coupled receptor T2R family.

The protein resides in the membrane. Functionally, receptor that may play a role in the perception of bitterness and is gustducin-linked. May play a role in sensing the chemical composition of the gastrointestinal content. The activity of this receptor may stimulate alpha gustducin, mediate PLC-beta-2 activation and lead to the gating of TRPM5. In Pan paniscus (Pygmy chimpanzee), this protein is Taste receptor type 2 member 62 (TAS2R62).